The following is a 1447-amino-acid chain: Calcium-dependent secretion activator (1447 aa).

The segment covering 1-15 (MIDPSSSEEEGEDDA) has biased composition (acidic residues). Disordered regions lie at residues 1–35 (MIDPSSSEEEGEDDAVPNVSSKGRLTNTTKGTSAV) and 101–163 (DTGN…EEEE). Composition is skewed to polar residues over residues 18–32 (NVSSKGRLTNTTKGT) and 111–126 (GIPSGISQETLNQSVG). Residues 127–144 (SSRANSLPRPLSPSPSLT) show a composition bias toward low complexity. Basic and acidic residues predominate over residues 145–163 (SEKHETAEPHGKHEREEEE). One can recognise a C2 domain in the interval 417–547 (SKYGLQKLKR…PLSSKSPEWH (131 aa)). Positions 573 to 683 (NMKHCGYLYA…WVMAMYRATG (111 aa)) constitute a PH domain. The 188-residue stretch at 970 to 1157 (VDMDRVLSEQ…DMIEQCIQRT (188 aa)) folds into the MHD1 domain. The span at 1386–1395 (REGEEEDNGD) shows a compositional bias: acidic residues. Residues 1386 to 1406 (REGEEEDNGDESTSNIPRGLP) form a disordered region.

In terms of tissue distribution, restricted to the nervous system at all stages of development and highly localized at synapses (at protein level).

It localises to the cytoplasmic vesicle membrane. The protein localises to the synapse. In terms of biological role, calcium-binding protein involved in exocytosis of vesicles filled with neurotransmitters and neuropeptides. May specifically mediate the Ca(2+)-dependent exocytosis of large dense-core vesicles (DCVs) and other dense-core vesicles. However, it probably also participates in small clear synaptic vesicles (SVs) exocytosis and it is unclear whether its function is related to Ca(2+) triggering. The polypeptide is Calcium-dependent secretion activator (Drosophila melanogaster (Fruit fly)).